Consider the following 205-residue polypeptide: NADH-quinone oxidoreductase subunit J (205 aa).

Transmembrane regions (helical) follow at residues 1–21, 26–46, 54–74, 89–109, and 142–162; these read MPIF…CVVL, VYSV…MILL, LLIV…IMML, LSLS…TVIL, and FMLP…SCIT.

Belongs to the complex I subunit 6 family.

The protein resides in the cell membrane. The enzyme catalyses a quinone + NADH + 5 H(+)(in) = a quinol + NAD(+) + 4 H(+)(out). In terms of biological role, NDH-1 shuttles electrons from NADH, via FMN and iron-sulfur (Fe-S) centers, to quinones in the respiratory chain. Couples the redox reaction to proton translocation (for every two electrons transferred, four hydrogen ions are translocated across the cytoplasmic membrane), and thus conserves the redox energy in a proton gradient. The polypeptide is NADH-quinone oxidoreductase subunit J (nuoJ) (Rickettsia typhi (strain ATCC VR-144 / Wilmington)).